Consider the following 148-residue polypeptide: Large ribosomal subunit protein bL9 (148 aa).

This sequence belongs to the bacterial ribosomal protein bL9 family.

In terms of biological role, binds to the 23S rRNA. The chain is Large ribosomal subunit protein bL9 from Acetivibrio thermocellus (strain ATCC 27405 / DSM 1237 / JCM 9322 / NBRC 103400 / NCIMB 10682 / NRRL B-4536 / VPI 7372) (Clostridium thermocellum).